The sequence spans 284 residues: L-ribulose-5-phosphate 3-epimerase UlaE (284 aa).

It belongs to the L-ribulose-5-phosphate 3-epimerase family.

It catalyses the reaction L-ribulose 5-phosphate = L-xylulose 5-phosphate. It participates in cofactor degradation; L-ascorbate degradation; D-xylulose 5-phosphate from L-ascorbate: step 3/4. Functionally, catalyzes the isomerization of L-xylulose-5-phosphate to L-ribulose-5-phosphate. Is involved in the anaerobic L-ascorbate utilization. In Escherichia coli O17:K52:H18 (strain UMN026 / ExPEC), this protein is L-ribulose-5-phosphate 3-epimerase UlaE.